The chain runs to 416 residues: Serine hydroxymethyltransferase (416 aa).

(6S)-5,6,7,8-tetrahydrofolate contacts are provided by residues leucine 121 and glycine 125–leucine 127. N6-(pyridoxal phosphate)lysine is present on lysine 229.

Belongs to the SHMT family. As to quaternary structure, homodimer. Requires pyridoxal 5'-phosphate as cofactor.

Its subcellular location is the cytoplasm. The enzyme catalyses (6R)-5,10-methylene-5,6,7,8-tetrahydrofolate + glycine + H2O = (6S)-5,6,7,8-tetrahydrofolate + L-serine. It participates in one-carbon metabolism; tetrahydrofolate interconversion. The protein operates within amino-acid biosynthesis; glycine biosynthesis; glycine from L-serine: step 1/1. In terms of biological role, catalyzes the reversible interconversion of serine and glycine with tetrahydrofolate (THF) serving as the one-carbon carrier. This reaction serves as the major source of one-carbon groups required for the biosynthesis of purines, thymidylate, methionine, and other important biomolecules. Also exhibits THF-independent aldolase activity toward beta-hydroxyamino acids, producing glycine and aldehydes, via a retro-aldol mechanism. The protein is Serine hydroxymethyltransferase of Neisseria meningitidis serogroup C (strain 053442).